The following is a 156-amino-acid chain: Ribosome maturation factor RimP (156 aa).

This sequence belongs to the RimP family.

It localises to the cytoplasm. In terms of biological role, required for maturation of 30S ribosomal subunits. This chain is Ribosome maturation factor RimP, found in Bacillus cereus (strain G9842).